Consider the following 315-residue polypeptide: MSNTDALNTANTQITENVDTSSMKVEKTHDSDPMKITNTSFALEMTQHLFEDLVAHGYKNIVKHEVYPGPIIDLQNLVRVMTKGTFIPIKMEDIKDLHDFVMDRLSEFDCSCLGHLCPKEYMIQIWKAGRIQSEFYYCYNYQLQDLSQIYPFVIEWILKRDDMPLNLDKESYEATALMMSKLLESLIKFGNEKIEFVKFYKLCGHIQCPCEKKPASYLDVKKLVGVLTDGGIIGFEGLTKLYVHLEKSIQEIDDRWSHWLPGRTRKPIYYKTFTKGRVTQLSIKCYSFYLQEIALIAYVVTQFILQEKPDLSYRA.

Positions 1–23 are enriched in polar residues; that stretch reads MSNTDALNTANTQITENVDTSSM. The tract at residues 1 to 31 is disordered; the sequence is MSNTDALNTANTQITENVDTSSMKVEKTHDS.

This is an uncharacterized protein from Acanthamoeba polyphaga mimivirus (APMV).